A 1597-amino-acid polypeptide reads, in one-letter code: Rho guanine nucleotide exchange factor 5 (1597 aa).

Disordered regions lie at residues 138–246 (PFSS…EGTL), 258–455 (EEQM…SLEP), and 467–1072 (GSFL…VFRE). Serine 184 carries the phosphoserine modification. The span at 192 to 204 (ETNQNEGSESGTI) shows a compositional bias: polar residues. A compositionally biased stretch (low complexity) spans 217 to 237 (ESQGLLHPQEVQVLEEQGQQE). The segment covering 266–278 (NDEKGEQKQKQEQ) has biased composition (basic and acidic residues). A compositionally biased stretch (acidic residues) spans 299-309 (GLNDGEWEQED). Basic and acidic residues-rich tracts occupy residues 323–368 (GEER…KEKG) and 394–404 (RSREEENEHHG). Positions 428–438 (LMTQIPGTQTE) are enriched in polar residues. Serine 445 and serine 450 each carry phosphoserine. Positions 474 to 490 (SPDKEIDQNSQQEESRL) are enriched in basic and acidic residues. The span at 512-522 (PRTPDSAPPSP) shows a compositional bias: pro residues. 2 stretches are compositionally biased toward polar residues: residues 583-601 (STGT…TVQH) and 655-682 (DYST…NLER). Residues 731-746 (QRRDTHPSVVETDGHA) show a composition bias toward basic and acidic residues. Composition is skewed to pro residues over residues 812 to 828 (PLPP…PPIS) and 838 to 856 (PLPP…PLPP). Arginine 866 is subject to Asymmetric dimethylarginine. Residues 901–920 (ATARSTESFTSTSRSKSEVS) show a composition bias toward low complexity. Residues 926–941 (SNMTNFLCPSSPTTPW) are compositionally biased toward polar residues. Residues 950 to 969 (SKDEAGVSEHPEAPAREPLR) are compositionally biased toward basic and acidic residues. 3 positions are modified to phosphoserine: serine 983, serine 1011, and serine 1044. A compositionally biased stretch (basic and acidic residues) spans 990-1012 (QPEKPSHLHLEKASSWPHRRDSG). The span at 1057 to 1072 (AVEKHPGPSDTVVFRE) shows a compositional bias: basic and acidic residues. Serine 1126 carries the post-translational modification Phosphoserine. The region spanning 1174 to 1358 (KLQEVKFELI…EQLIRDCNNN (185 aa)) is the DH domain. One can recognise a PH domain in the interval 1390–1502 (WLVKSGELTA…WISALAMPRE (113 aa)). Residues 1510-1571 (YNSPQVQCLR…PVQQVEFISN (62 aa)) form the SH3 domain.

Interacts with SRC. Forms a ternary complex with SRC and the PI3K 85 kDa subunit. Interacts with and is activated by the heterodimer formed by GNB1 and GNG2. Interacts with ODAM (via C-terminus). Interacts with RHOA. Post-translationally, activation of SRC induces tyrosine phosphorylation of ARHGEF5. Ubiquitously expressed with highest levels in placenta. High levels are also found in colon, kidney, trachea, prostate, liver, pancreas, pituitary gland, thyroid gland and mammary gland. In fetal tissues, expressed at high levels in kidney, lung and liver. Expressed at low levels in lung and heart.

Its subcellular location is the cytoplasm. It localises to the nucleus. The protein localises to the cell projection. The protein resides in the podosome. In terms of biological role, guanine nucleotide exchange factor which activates Rho GTPases. Strongly activates RHOA. Also strongly activates RHOB, weakly activates RHOC and RHOG and shows no effect on RHOD, RHOV, RHOQ or RAC1. Involved in regulation of cell shape and actin cytoskeletal organization. Plays a role in actin organization by generating a loss of actin stress fibers and the formation of membrane ruffles and filopodia. Required for SRC-induced podosome formation. Involved in positive regulation of immature dendritic cell migration. The protein is Rho guanine nucleotide exchange factor 5 (ARHGEF5) of Homo sapiens (Human).